The sequence spans 1453 residues: Collagen alpha-1(I) chain (1453 aa).

The first 22 residues, 1–22 (MFSFVDLRLLLLLGATALLTHG), serve as a signal peptide directing secretion. Positions 23–151 (QEDIPEVSCI…PPGLGGNFAS (129 aa)) are cleaved as a propeptide — N-terminal propeptide. The VWFC domain maps to 29 to 87 (VSCIHNGLRVPNGETWKPEVCLICICHNGTAVCDDVQCNEELDCPNPQRREGECCAFCP). An N-linked (GlcNAc...) asparagine glycan is attached at asparagine 56. The disordered stretch occupies residues 94-1210 (NSEDVGVEGP…GGRYYRADDA (1117 aa)). 2 stretches are compositionally biased toward pro residues: residues 109–118 (PQGPRGPVGP) and 128–143 (PGLP…PGPP). The nonhelical region (N-terminal) stretch occupies residues 152 to 167 (QMSYGYDEKSAGVSVP). Lysine 160 is modified (allysine). The residue at position 161 (serine 161) is a Phosphoserine. A triple-helical region region spans residues 168-1181 (GPMGPSGPRG…PGPPGPPGPP (1014 aa)). Residues proline 179, proline 182, proline 185, proline 194, proline 197, proline 200, proline 215, proline 230, proline 236, proline 245, and proline 251 each carry the 4-hydroxyproline modification. Residues 198–207 (GEPGGSGPMG) are compositionally biased toward gly residues. The span at 218 to 232 (NGDDGEAGKPGRPGE) shows a compositional bias: basic and acidic residues. 5-hydroxylysine; alternate is present on lysine 254. O-linked (Gal...) hydroxylysine; alternate glycosylation is present at lysine 254. Serine 260 carries the post-translational modification Phosphoserine. Over residues 268–284 (DAGPAGPKGEPGSPGEN) the composition is skewed to low complexity. Residues proline 278, proline 281, proline 287, proline 296, and proline 302 each carry the 4-hydroxyproline modification. Low complexity predominate over residues 307-320 (TAGARGNDGAVGAA). Over residues 322–334 (PPGPTGPTGPPGF) the composition is skewed to pro residues. A 4-hydroxyproline mark is found at proline 323, proline 332, proline 335, proline 362, proline 365, proline 377, proline 383, proline 392, proline 398, proline 401, and proline 416. Residues 368–407 (AGAAGPAGNPGADGQPGAKGANGAPGIAGAPGFPGARGPS) show a composition bias toward low complexity. Lysine 419 carries the 5-hydroxylysine modification. Proline 425, proline 428, proline 440, proline 449, proline 464, proline 470, proline 479, and proline 485 each carry 4-hydroxyproline. The span at 474–483 (GERGGPGSRG) shows a compositional bias: gly residues. The residue at position 494 (lysine 494) is a 5-hydroxylysine. Residues 499-515 (ERGAPGPAGPKGSPGEA) are compositionally biased toward low complexity. 4-hydroxyproline is present on residues proline 503, proline 512, proline 518, proline 524, proline 533, proline 536, proline 545, proline 554, proline 560, proline 572, proline 581, proline 590, proline 593, proline 611, proline 629, proline 635, proline 641, proline 647, proline 653, proline 659, proline 671, proline 680, proline 692, proline 704, proline 707, proline 713, proline 719, and proline 728. The segment covering 527–566 (KGLTGSPGSPGPDGKTGPPGPAGQDGRPGPAGPPGARGQA) has biased composition (low complexity). Positions 623-650 (QGPAGSPGFQGLPGPAGPPGEAGKPGEQ) are enriched in low complexity. Low complexity-rich tracts occupy residues 685-695 (PRGNNGAPGND) and 703-716 (APGA…PGLQ). The short motif at 734–736 (RGD) is the Cell attachment site element. Lysine 740 carries the post-translational modification 5-hydroxylysine. Residues proline 746, proline 761, and proline 767 each carry the 4-hydroxyproline modification. Position 776 is a phosphoserine (serine 776). 7 positions are modified to 4-hydroxyproline: proline 788, proline 797, proline 806, proline 812, proline 830, proline 839, and proline 848. Low complexity predominate over residues 800–815 (AGFAGPPGADGQPGAK). Pro residues predominate over residues 829-841 (PPGPAGPAGPPGP). Residues 842–872 (IGNVGAPGPKGPRGAAGPPGATGFPGAAGRV) show a composition bias toward low complexity. 5-hydroxylysine is present on lysine 851. 4-hydroxyproline is present on residues proline 860 and proline 866. Proline 874 is modified (3-hydroxyproline). Proline 875, proline 884, proline 887, proline 908, proline 917, proline 926, proline 935, proline 953, proline 962, proline 965, proline 971, proline 986, proline 992, proline 998, proline 1007, and proline 1013 each carry 4-hydroxyproline. The span at 901–910 (ETGPAGRPGE) shows a compositional bias: low complexity. Residues 920–935 (AGEKGSPGADGPAGSP) are compositionally biased toward low complexity. Positions 985–995 (PPGPMGPPGLA) are enriched in pro residues. A compositionally biased stretch (low complexity) spans 997 to 1012 (PPGESGREGSPGAEGS). Lysine 1022 is subject to 5-hydroxylysine. A compositionally biased stretch (pro residues) spans 1031 to 1046 (AGPPGAPGAPGAPGPV). Proline 1034, proline 1037, and proline 1040 each carry 4-hydroxyproline. Residues 1067–1081 (IGPAGARGPAGPQGP) are compositionally biased toward low complexity. Residues 1082–1084 (RGD) carry the Cell attachment site motif. Over residues 1082 to 1096 (RGDKGETGEQGDRGI) the composition is skewed to basic and acidic residues. Lysine 1085 carries the 5-hydroxylysine modification. 5-hydroxylysine; alternate is present on lysine 1097. Lysine 1097 carries an O-linked (Gal...) hydroxylysine; alternate glycan. Over residues 1102-1148 (FSGLQGPPGSPGSPGEQGPSGASGPAGPRGPPGSAGSPGKDGLNGLP) the composition is skewed to low complexity. Proline 1109, proline 1112, proline 1115, proline 1133, and proline 1148 each carry 4-hydroxyproline. Position 1153 is a 3-hydroxyproline (proline 1153). Proline 1154 bears the 4-hydroxyproline mark. Positions 1166 to 1181 (AGPPGPPGPPGPPGPP) are enriched in pro residues. Proline 1168 is modified (3-hydroxyproline). Proline 1169 is subject to 4-hydroxyproline. Proline 1171 bears the 3-hydroxyproline mark. Proline 1172 carries the 4-hydroxyproline modification. Proline 1174 bears the 3-hydroxyproline mark. Proline 1175, proline 1178, and proline 1181 each carry 4-hydroxyproline. The tract at residues 1182–1207 (SGGYDFSFLPQPPQEKSQDGGRYYRA) is nonhelical region (C-terminal). Lysine 1197 is modified (allysine). Basic and acidic residues predominate over residues 1197 to 1210 (KSQDGGRYYRADDA). Positions 1208 to 1453 (DDANVVRDRD…GLDIGPACFV (246 aa)) are cleaved as a propeptide — C-terminal propeptide. The region spanning 1218 to 1453 (LEVDTTLKSL…GLDIGPACFV (236 aa)) is the Fibrillar collagen NC1 domain. Intrachain disulfides connect cysteine 1248–cysteine 1280, cysteine 1288–cysteine 1451, and cysteine 1359–cysteine 1404. Residues aspartate 1266, asparagine 1268, glutamine 1269, cysteine 1271, and aspartate 1274 each contribute to the Ca(2+) site. Asparagine 1354 is a glycosylation site (N-linked (GlcNAc...) asparagine).

It belongs to the fibrillar collagen family. As to quaternary structure, trimers of one alpha 2(I) and two alpha 1(I) chains. Interacts with MRC2. Interacts with TRAM2. Interacts with MFAP4 in a Ca (2+)-dependent manner. Contains mostly 4-hydroxyproline. Proline residues at the third position of the tripeptide repeating unit (G-X-Y) are hydroxylated in some or all of the chains. Post-translationally, contains 3-hydroxyproline at a few sites. This modification occurs on the first proline residue in the sequence motif Gly-Pro-Hyp, where Hyp is 4-hydroxyproline. In terms of processing, lysine residues at the third position of the tripeptide repeating unit (G-X-Y) are 5-hydroxylated in some or all of the chains. O-glycosylated on hydroxylated lysine residues. The O-linked glycan consists of a Glc-Gal disaccharide. As to expression, forms the fibrils of tendon, ligaments and bones. In bones the fibrils are mineralized with calcium hydroxyapatite.

It localises to the secreted. It is found in the extracellular space. The protein localises to the extracellular matrix. Type I collagen is a member of group I collagen (fibrillar forming collagen). The sequence is that of Collagen alpha-1(I) chain from Mus musculus (Mouse).